A 345-amino-acid chain; its full sequence is Phosphate import ATP-binding protein PstB 2 (345 aa).

The interval 1–57 (MSDTPQSEPRRSDDRSGADDATAAAAGSTDAAAAAVSSKTGGIAGPPGGPGEVDGDE) is disordered. The span at 8-18 (EPRRSDDRSGA) shows a compositional bias: basic and acidic residues. The segment covering 19 to 35 (DDATAAAAGSTDAAAAA) has biased composition (low complexity). Residues 42-52 (GIAGPPGGPGE) show a composition bias toward gly residues. Residues 86–340 (VSVSDLDTYY…PQSQRVEDYV (255 aa)) form the ABC transporter domain. 118–125 (GPSGCGKS) serves as a coordination point for ATP.

It belongs to the ABC transporter superfamily. Phosphate importer (TC 3.A.1.7) family. In terms of assembly, the complex is composed of two ATP-binding proteins (PstB), two transmembrane proteins (PstC and PstA) and a solute-binding protein (PstS).

The protein resides in the cell membrane. It catalyses the reaction phosphate(out) + ATP + H2O = ADP + 2 phosphate(in) + H(+). Its function is as follows. Part of the ABC transporter complex PstSACB involved in phosphate import. Responsible for energy coupling to the transport system. The polypeptide is Phosphate import ATP-binding protein PstB 2 (Halobacterium salinarum (strain ATCC 700922 / JCM 11081 / NRC-1) (Halobacterium halobium)).